The sequence spans 116 residues: Ribosome-binding factor A (116 aa).

This sequence belongs to the RbfA family. Monomer. Binds 30S ribosomal subunits, but not 50S ribosomal subunits or 70S ribosomes.

It is found in the cytoplasm. Functionally, one of several proteins that assist in the late maturation steps of the functional core of the 30S ribosomal subunit. Associates with free 30S ribosomal subunits (but not with 30S subunits that are part of 70S ribosomes or polysomes). Required for efficient processing of 16S rRNA. May interact with the 5'-terminal helix region of 16S rRNA. This Streptococcus sanguinis (strain SK36) protein is Ribosome-binding factor A.